The sequence spans 353 residues: UPF0283 membrane protein YcjF (353 aa).

Basic and acidic residues predominate over residues 1-19; that stretch reads MSEPLKPRIDFAEPLKEEP. Residues 1 to 35 are disordered; that stretch reads MSEPLKPRIDFAEPLKEEPTSAFKAQQTFSEAESR. 3 helical membrane passes run 70 to 90, 100 to 120, and 213 to 233; these read MVMG…IQWT, VALG…GSVV, and ESTL…FIAW.

The protein belongs to the UPF0283 family.

It is found in the cell inner membrane. This chain is UPF0283 membrane protein YcjF, found in Salmonella agona (strain SL483).